We begin with the raw amino-acid sequence, 319 residues long: Vesicle-associated membrane protein-associated protein scs22 (319 aa).

Residues 1–121 (MALECDSTIV…SERKIRCVYS (121 aa)) form the MSP domain. Residues 1–298 (MALECDSTIV…GAKVVPQIHN (298 aa)) lie on the Cytoplasmic side of the membrane. Low complexity predominate over residues 127 to 150 (ANAHANAHHQPAQTTTTSIPTSAT). The disordered stretch occupies residues 127–244 (ANAHANAHHQ…TTSPNNENNA (118 aa)). Polar residues-rich tracts occupy residues 151-165 (DNYTTVNGNVNQSYS), 185-201 (STATTQHTQLPKTSAVS), and 231-244 (SVPTTTSPNNENNA). T236 is modified (phosphothreonine). 2 positions are modified to phosphoserine: S237 and S281. A helical; Anchor for type IV membrane protein transmembrane segment spans residues 299 to 319 (TVTVQTAFLLAIICFLIGLLF).

It belongs to the VAMP-associated protein (VAP) (TC 9.B.17) family. As to quaternary structure, interacts with epr1.

It is found in the endoplasmic reticulum membrane. Vesicle-associated membrane protein-associated protein (VAP) implicated in maintaining the cortical endoplasmic reticulum (ER)-plasma membrane (PM) attachment. ER-PM contacts function to modulate the distribution of contractile ring components to ensure robust ring assembly. ER-PM contacts function also in controlling exocytosis and maintenance of cell polarity regulating cell shape. VAPs play an important role in regulating eisosome assembly. VAPs also contribute to ER-phagy by tethering atg8 to the ER membrane, but also by maintaining the ER-plasma membrane contact. This chain is Vesicle-associated membrane protein-associated protein scs22 (scs22), found in Schizosaccharomyces pombe (strain 972 / ATCC 24843) (Fission yeast).